The sequence spans 131 residues: Phosphoribosyl-AMP cyclohydrolase (131 aa).

Asp-78 contacts Mg(2+). Cys-79 provides a ligand contact to Zn(2+). Residues Asp-80 and Asp-82 each contribute to the Mg(2+) site. Zn(2+)-binding residues include Cys-96 and Cys-103.

This sequence belongs to the PRA-CH family. Homodimer. Mg(2+) is required as a cofactor. Requires Zn(2+) as cofactor.

Its subcellular location is the cytoplasm. It carries out the reaction 1-(5-phospho-beta-D-ribosyl)-5'-AMP + H2O = 1-(5-phospho-beta-D-ribosyl)-5-[(5-phospho-beta-D-ribosylamino)methylideneamino]imidazole-4-carboxamide. It functions in the pathway amino-acid biosynthesis; L-histidine biosynthesis; L-histidine from 5-phospho-alpha-D-ribose 1-diphosphate: step 3/9. Catalyzes the hydrolysis of the adenine ring of phosphoribosyl-AMP. This is Phosphoribosyl-AMP cyclohydrolase from Neisseria gonorrhoeae (strain ATCC 700825 / FA 1090).